A 360-amino-acid polypeptide reads, in one-letter code: Peptide chain release factor 1 (360 aa).

Residue Q235 is modified to N5-methylglutamine. Over residues 281–307 (ERQRADSERSADRRSQVGSGDRSERIR) the composition is skewed to basic and acidic residues. The tract at residues 281–311 (ERQRADSERSADRRSQVGSGDRSERIRTYNF) is disordered.

The protein belongs to the prokaryotic/mitochondrial release factor family. In terms of processing, methylated by PrmC. Methylation increases the termination efficiency of RF1.

The protein localises to the cytoplasm. Functionally, peptide chain release factor 1 directs the termination of translation in response to the peptide chain termination codons UAG and UAA. This chain is Peptide chain release factor 1, found in Rhizobium meliloti (strain 1021) (Ensifer meliloti).